Consider the following 90-residue polypeptide: Long neurotoxin 1 (90 aa).

The first 21 residues, 1 to 21 (MKTLLLTLVVVTIVCLDVGNS), serve as a signal peptide directing secretion. Disulfide bonds link Cys24/Cys42, Cys35/Cys63, Cys48/Cys52, Cys67/Cys78, and Cys79/Cys84.

This sequence belongs to the three-finger toxin family. Long-chain subfamily. Type II alpha-neurotoxin sub-subfamily. In terms of tissue distribution, expressed by the venom gland.

It is found in the secreted. Its function is as follows. Binds with high affinity to muscular (alpha-1/CHRNA1) and neuronal (alpha-7/CHRNA7) nicotinic acetylcholine receptor (nAChR) and inhibits acetylcholine from binding to the receptor, thereby impairing neuromuscular and neuronal transmission. This chain is Long neurotoxin 1, found in Austrelaps superbus (Lowland copperhead snake).